The following is a 130-amino-acid chain: Glycoprotein hormone beta-5 (130 aa).

A signal peptide spans 1-24 (MKLAFLFLGPMALLLLAGYGCVLG). Intrachain disulfides connect C36–C84, C50–C99, C60–C115, C64–C117, and C120–C127. N-linked (GlcNAc...) asparagine glycosylation occurs at N87.

The protein belongs to the glycoprotein hormones subunit beta family. Heterodimer with GPHA2; this heterodimer interacts with thyroid-stimulating hormone receptor (TSHR), and hence stimulates cAMP production. In terms of processing, N-glycosylated. In terms of tissue distribution, highly expressed in brain and at low levels in pituitary. Also found in retina, testis and skin but not in pancreas, parotid, kidney, stomach, liver, colon, small intestine, thyroid, brain or adrenal gland. In pituitary, colocalizes with ACTH, suggesting that it is located in corticotrophs.

The protein localises to the secreted. In terms of biological role, functions as a heterodimeric glycoprotein hormone with GPHA2 able to bind and activate the thyroid-stimulating hormone receptor (TSHR), leading to increased cAMP production. Plays a central role in controlling thyroid cell metabolism. The sequence is that of Glycoprotein hormone beta-5 (GPHB5) from Homo sapiens (Human).